The chain runs to 321 residues: Olfactory receptor 5P60 (321 aa).

Residues 1–28 (MAFLHNGNHTAVTEFILLGLTDDPVLRI) lie on the Extracellular side of the membrane. Asn8 is a glycosylation site (N-linked (GlcNAc...) asparagine). Residues 29–49 (VLFTIILCIYLVTVSGNLSTI) form a helical membrane-spanning segment. At 50–57 (LLIRVSSQ) the chain is on the cytoplasmic side. Residues 58–78 (LHHPMYFFLSHLASADIGYSS) form a helical membrane-spanning segment. Topologically, residues 79-102 (SVTPNMLVNFLVKQNTISYIGCSI) are extracellular. Cys100 and Cys192 are oxidised to a cystine. The chain crosses the membrane as a helical span at residues 103–123 (QFGSAAFFGGLECFLLAVMAY). At 124–136 (DRFVAICNPLLYS) the chain is on the cytoplasmic side. Residues 137-157 (TKMSTQVCVQLVVGSYIGGFL) traverse the membrane as a helical segment. Residues 158–199 (NASFATVSFLFLFFCGPNIINHFFCDFAPLIELSCSDVRISV) lie on the Extracellular side of the membrane. A helical transmembrane segment spans residues 200 to 220 (LVTSFSAGTVTMLTVLVIAIS). The Cytoplasmic segment spans residues 221–240 (YTYILITILKMRSTEGRHKA). The chain crosses the membrane as a helical span at residues 241-261 (FSTCTSHLTAVSLFYGTITFI). Topologically, residues 262–274 (YVMPKSRYSTDQN) are extracellular. The chain crosses the membrane as a helical span at residues 275 to 295 (KVVSVFYMVVIPMLNPLIYSL). Residues 296-321 (RNNEIKGALRRHLGKKIFSQSNILFY) are Cytoplasmic-facing.

It belongs to the G-protein coupled receptor 1 family.

The protein localises to the cell membrane. Functionally, potential odorant receptor. This chain is Olfactory receptor 5P60, found in Mus musculus (Mouse).